The chain runs to 146 residues: Large ribosomal subunit protein uL15 (146 aa).

Residues 1-10 are compositionally biased toward polar residues; sequence MRLNQLSPSA. A disordered region spans residues 1–54; that stretch reads MRLNQLSPSAGSRPDAKRAGRGAGSGLGKTAGRGHKGQHSRSGGFHKVGFEGGQ. A compositionally biased stretch (gly residues) spans 21 to 31; it reads RGAGSGLGKTA.

This sequence belongs to the universal ribosomal protein uL15 family. Part of the 50S ribosomal subunit.

Binds to the 23S rRNA. The protein is Large ribosomal subunit protein uL15 of Halorhodospira halophila (strain DSM 244 / SL1) (Ectothiorhodospira halophila (strain DSM 244 / SL1)).